We begin with the raw amino-acid sequence, 164 residues long: V-type proton ATPase subunit c' (164 aa).

At methionine 1–tyrosine 14 the chain is on the vacuolar side. The helical transmembrane segment at alanine 15–glycine 37 threads the bilayer. At threonine 38–serine 59 the chain is on the cytoplasmic side. The helical transmembrane segment at leucine 60–isoleucine 80 threads the bilayer. Residues alanine 81–histidine 98 lie on the Vacuolar side of the membrane. A helical transmembrane segment spans residues leucine 99–glycine 120. At aspartate 121–arginine 132 the chain is on the cytoplasmic side. The helical transmembrane segment at leucine 133–leucine 158 threads the bilayer. Topologically, residues asparagine 159–glutamate 164 are vacuolar.

The protein belongs to the V-ATPase proteolipid subunit family. As to quaternary structure, V-ATPase is a heteromultimeric enzyme composed of a peripheral catalytic V1 complex (components A to H) attached to an integral membrane V0 proton pore complex (components: a, c, c', c'', d, e, f and VOA1). The decameric c-ring forms the proton-conducting pore, and is composed of eight proteolipid subunits c, one subunit c' and one subunit c''.

Its subcellular location is the vacuole membrane. Its function is as follows. Proton-conducting pore forming subunit of the V0 complex of vacuolar(H+)-ATPase (V-ATPase), a multisubunit enzyme composed of a peripheral complex (V1) that hydrolyzes ATP and a membrane integral complex (V0) that translocates protons. V-ATPase is responsible for acidifying and maintaining the pH of intracellular compartments. This chain is V-type proton ATPase subunit c' (VMA11), found in Saccharomyces cerevisiae (strain ATCC 204508 / S288c) (Baker's yeast).